Here is a 28-residue protein sequence, read N- to C-terminus: Ranatuerin-2LTa (28 aa).

Residues cysteine 23 and cysteine 28 are joined by a disulfide bond.

In terms of tissue distribution, expressed by the skin glands.

The protein localises to the secreted. Has antibacterial activity. The protein is Ranatuerin-2LTa of Rana latastei (Italian agile frog).